The chain runs to 622 residues: Pyranose 2-oxidase (622 aa).

The first 28 residues, 1-28, serve as a signal peptide directing secretion; it reads MSTSSSDPFYNFAKTSFKSAAAQKASAT. The propeptide occupies 29-38; it reads SLPPLPGPDQ. The residue at position 167 (His167) is a Tele-8alpha-FAD histidine. The substrate site is built by Gln448 and His450. His548 serves as the catalytic Proton acceptor. Residue Asn593 is part of the active site.

This sequence belongs to the GMC oxidoreductase family. Homotetramer. The cofactor is FAD.

It is found in the periplasm. The catalysed reaction is D-glucose + O2 = 2-dehydro-D-glucose + H2O2. Functionally, catalyzes the oxidation of various aldopyranoses and disaccharides on carbon-2 to the corresponding 2-keto sugars concomitant with the reduction of O(2) to H(2)O(2). Plays an important role in lignin degradation of wood rot fungi by supplying the essential cosubstrate H(2)O(2) for the ligninolytic peroxidases, lignin peroxidase and manganese-dependent peroxidase. This chain is Pyranose 2-oxidase (p2ox), found in Trametes pubescens (White-rot fungus).